Consider the following 460-residue polypeptide: Elongation factor 1-alpha (460 aa).

Gly-2 is subject to N,N,N-trimethylglycine. Position 3 is an N6,N6-dimethyllysine; alternate (Lys-3). Lys-3 carries the post-translational modification N6-methyllysine; alternate. The region spanning 5-240 (KLHVNVVVIG…DAIEPPVRPS (236 aa)) is the tr-type G domain. The tract at residues 14 to 21 (GHVDSGKS) is G1. 14–21 (GHVDSGKS) contributes to the GTP binding site. At Lys-30 the chain carries N6-methyllysine. Residues 70 to 74 (GITID) are G2. Lys-79 bears the N6,N6,N6-trimethyllysine mark. The interval 91–94 (DAPG) is G3. GTP contacts are provided by residues 91–95 (DAPGH) and 153–156 (NKMD). The segment at 153 to 156 (NKMD) is G4. The segment at 192–194 (SGW) is G5. The residue at position 316 (Lys-316) is an N6,N6-dimethyllysine; alternate. At Lys-316 the chain carries N6-methyllysine; alternate. Lys-390 is modified (N6-methyllysine).

Belongs to the TRAFAC class translation factor GTPase superfamily. Classic translation factor GTPase family. EF-Tu/EF-1A subfamily.

It localises to the cytoplasm. This protein promotes the GTP-dependent binding of aminoacyl-tRNA to the A-site of ribosomes during protein biosynthesis. This Schizophyllum commune (Split gill fungus) protein is Elongation factor 1-alpha (TEF1).